A 98-amino-acid chain; its full sequence is MHGAPRLTFPCASEYLWHAREKAYQDHRRKVQSAQPLVDTRAPLTFRHLHLKLKRLKLEEERLSVIERDNRLLLEKVASVMRTRGQTDSKNNSKHRRK.

It belongs to the CFAP97 family.

This is an uncharacterized protein from Homo sapiens (Human).